Consider the following 319-residue polypeptide: Putative peptide permease protein BOV_A0351 (319 aa).

The next 6 helical transmembrane spans lie at 9-29, 102-122, 138-158, 182-202, 242-262, and 284-304; these read LLIG…LLQL, LLLM…TGII, LALL…LYVF, LLRH…ALIM, LPVV…AIFI, and YPVI…VNIL. Positions 98-305 constitute an ABC transmembrane type-1 domain; that stretch reads IGPTLLLMAA…ACVIIVNILT (208 aa).

Belongs to the binding-protein-dependent transport system permease family. As to quaternary structure, the complex is composed of two ATP-binding proteins (BOV_A0347 and BOV_A0348), two transmembrane proteins (BOV_A0350 and BOV_A0351) and a solute-binding protein (BOV_A0352).

It localises to the cell inner membrane. Probably part of an ABC transporter complex that could be involved in peptide import. Probably responsible for the translocation of the substrate across the membrane. The protein is Putative peptide permease protein BOV_A0351 of Brucella ovis (strain ATCC 25840 / 63/290 / NCTC 10512).